Here is a 400-residue protein sequence, read N- to C-terminus: uncharacterized protein (400 aa).

Residues 1–31 (MENPIKPVATRSIGIAVVLLVVGIVIGFAVG) form the signal peptide.

This sequence belongs to the bacterial solute-binding protein 1 family. WtpA subfamily.

This is an uncharacterized protein from Thermoplasma acidophilum (strain ATCC 25905 / DSM 1728 / JCM 9062 / NBRC 15155 / AMRC-C165).